We begin with the raw amino-acid sequence, 443 residues long: Amino-acid acetyltransferase (443 aa).

The region spanning 296–434 (EQIRRATIND…KKLMYNYQRR (139 aa)) is the N-acetyltransferase domain.

This sequence belongs to the acetyltransferase family. ArgA subfamily. In terms of assembly, homohexamer.

It localises to the cytoplasm. The catalysed reaction is L-glutamate + acetyl-CoA = N-acetyl-L-glutamate + CoA + H(+). It participates in amino-acid biosynthesis; L-arginine biosynthesis; N(2)-acetyl-L-ornithine from L-glutamate: step 1/4. The chain is Amino-acid acetyltransferase from Escherichia fergusonii (strain ATCC 35469 / DSM 13698 / CCUG 18766 / IAM 14443 / JCM 21226 / LMG 7866 / NBRC 102419 / NCTC 12128 / CDC 0568-73).